The primary structure comprises 166 residues: MYKSAINIVLFCPEIPNNTGNIVRSCTAFKANLHLIKPYGFFLNDKRMVRAGLNCWDKVQMFEHKSWEHFIETTPPNKAIWLLTKSGTTTPDQINMQTDNREQLYFVFGQETKGLPQTLMEQYSQNQVRIPIWNPVRSINLSNTVACVLYEYAKQNHYFNLDKQCA.

S-adenosyl-L-methionine contacts are provided by leucine 83, glycine 109, isoleucine 130, and serine 138.

This sequence belongs to the class IV-like SAM-binding methyltransferase superfamily. RNA methyltransferase TrmH family. TrmL subfamily.

It is found in the cytoplasm. The enzyme catalyses cytidine(34) in tRNA + S-adenosyl-L-methionine = 2'-O-methylcytidine(34) in tRNA + S-adenosyl-L-homocysteine + H(+). It carries out the reaction 5-carboxymethylaminomethyluridine(34) in tRNA(Leu) + S-adenosyl-L-methionine = 5-carboxymethylaminomethyl-2'-O-methyluridine(34) in tRNA(Leu) + S-adenosyl-L-homocysteine + H(+). Its function is as follows. Could methylate the ribose at the nucleotide 34 wobble position in tRNA. In Mycoplasma pneumoniae (strain ATCC 29342 / M129 / Subtype 1) (Mycoplasmoides pneumoniae), this protein is Putative tRNA (cytidine(34)-2'-O)-methyltransferase.